A 143-amino-acid polypeptide reads, in one-letter code: Small ribosomal subunit protein uS9 (143 aa).

The disordered stretch occupies residues 123-143 (RPEPKKFGGRGARARFQKSYR). The span at 134–143 (ARARFQKSYR) shows a compositional bias: basic residues.

This sequence belongs to the universal ribosomal protein uS9 family.

The protein is Small ribosomal subunit protein uS9 (RPS16) of Eremothecium gossypii (strain ATCC 10895 / CBS 109.51 / FGSC 9923 / NRRL Y-1056) (Yeast).